A 514-amino-acid chain; its full sequence is MKYRDLRDFLAQLERQGELKRITAPVSTRLEMTEIADRVLRAGGPALLFENARHNDAPADMPVLANLFGTPRRVAWGMGADDVGALRETGELLASLREPEAPKGLRDALAKVSMLKAALWDMSPKTVRSAACQEIVWEGADVDLGRLPIQTCWPGDVAPLLAWGLVITRGPNARRQNLGIYRQQPLGPNKLIMRWLSHRGGALDFRDHAQAHPGKPFPIAVALGADPATILGAVTPVPDTLSEYQFAGLLRGSRTEVVKALGSDLSVPASAEIVLEGHLLPADDPRAVAAAVPEGANPPPATGYEMALEGPYGDHTGYYNEQDWFPVFTVDRITMRRNPIYHSTYTGKPPDEPAVLGVALNEVFVPLLRRQLPEIVDFYLPPEGCSYRLAVVSIRKQYAGHAKRVMFGLWSVLRQFMYTKFIVVVDEDIDPRDWTEVVWAMTTRMDPVRDTVLVENTPIDYLDFASPVSGLGGKMGLDATNKWPGETSREWGTPIHMDEAVKRRVDAMWDTLGL.

N177 contacts Mn(2+). Residues 180 to 182 (IYR), 194 to 196 (RWL), and 199 to 200 (RG) contribute to the prenylated FMN site. E243 contacts Mn(2+). D314 acts as the Proton donor in catalysis.

This sequence belongs to the UbiD family. As to quaternary structure, homohexamer. Requires prenylated FMN as cofactor. Mn(2+) is required as a cofactor.

Its subcellular location is the cell membrane. The catalysed reaction is a 4-hydroxy-3-(all-trans-polyprenyl)benzoate + H(+) = a 2-(all-trans-polyprenyl)phenol + CO2. The protein operates within cofactor biosynthesis; ubiquinone biosynthesis. In terms of biological role, catalyzes the decarboxylation of 3-octaprenyl-4-hydroxy benzoate to 2-octaprenylphenol, an intermediate step in ubiquinone biosynthesis. This chain is 3-octaprenyl-4-hydroxybenzoate carboxy-lyase, found in Bordetella bronchiseptica (strain ATCC BAA-588 / NCTC 13252 / RB50) (Alcaligenes bronchisepticus).